A 429-amino-acid polypeptide reads, in one-letter code: Phosphomethylpyrimidine synthase (429 aa).

Substrate-binding positions include N66, M95, Y124, H163, 185–187, 226–229, and E265; these read SRG and DGLR. H269 is a binding site for Zn(2+). Y292 contributes to the substrate binding site. H333 serves as a coordination point for Zn(2+). C407, C410, and C414 together coordinate [4Fe-4S] cluster.

The protein belongs to the ThiC family. Requires [4Fe-4S] cluster as cofactor.

It catalyses the reaction 5-amino-1-(5-phospho-beta-D-ribosyl)imidazole + S-adenosyl-L-methionine = 4-amino-2-methyl-5-(phosphooxymethyl)pyrimidine + CO + 5'-deoxyadenosine + formate + L-methionine + 3 H(+). It participates in cofactor biosynthesis; thiamine diphosphate biosynthesis. Functionally, catalyzes the synthesis of the hydroxymethylpyrimidine phosphate (HMP-P) moiety of thiamine from aminoimidazole ribotide (AIR) in a radical S-adenosyl-L-methionine (SAM)-dependent reaction. The polypeptide is Phosphomethylpyrimidine synthase (Pyrococcus furiosus (strain ATCC 43587 / DSM 3638 / JCM 8422 / Vc1)).